The sequence spans 299 residues: Acetylglutamate kinase (299 aa).

Substrate-binding positions include 70-71 (GG), arginine 92, and asparagine 186.

It belongs to the acetylglutamate kinase family. ArgB subfamily.

It is found in the cytoplasm. The catalysed reaction is N-acetyl-L-glutamate + ATP = N-acetyl-L-glutamyl 5-phosphate + ADP. It participates in amino-acid biosynthesis; L-arginine biosynthesis; N(2)-acetyl-L-ornithine from L-glutamate: step 2/4. In terms of biological role, catalyzes the ATP-dependent phosphorylation of N-acetyl-L-glutamate. The polypeptide is Acetylglutamate kinase (Thermoanaerobacter sp. (strain X514)).